A 362-amino-acid polypeptide reads, in one-letter code: Histidinol-phosphate aminotransferase (362 aa).

K218 carries the post-translational modification N6-(pyridoxal phosphate)lysine.

This sequence belongs to the class-II pyridoxal-phosphate-dependent aminotransferase family. Histidinol-phosphate aminotransferase subfamily. Homodimer. Pyridoxal 5'-phosphate is required as a cofactor.

It carries out the reaction L-histidinol phosphate + 2-oxoglutarate = 3-(imidazol-4-yl)-2-oxopropyl phosphate + L-glutamate. It functions in the pathway amino-acid biosynthesis; L-histidine biosynthesis; L-histidine from 5-phospho-alpha-D-ribose 1-diphosphate: step 7/9. The protein is Histidinol-phosphate aminotransferase of Xanthomonas campestris pv. campestris (strain 8004).